We begin with the raw amino-acid sequence, 422 residues long: Histidine--tRNA ligase (422 aa).

Belongs to the class-II aminoacyl-tRNA synthetase family. Homodimer.

It localises to the cytoplasm. The enzyme catalyses tRNA(His) + L-histidine + ATP = L-histidyl-tRNA(His) + AMP + diphosphate + H(+). The polypeptide is Histidine--tRNA ligase (Syntrophomonas wolfei subsp. wolfei (strain DSM 2245B / Goettingen)).